The following is a 394-amino-acid chain: MAKEVFQRTKPHMNVGTIGHVDHGKTTLTAAISIYCSKVNKDAKALKYEDIDNAPEEKARGITINARHIEYETAGRHYAHVDCPGHADYIKNMITGAAQMDAAILLVAADSGAEPQTKEHLLLAQRMGIKKIIVFLNKLDLADPELVELVEVEVLELVEKYGFPGDTPIVKGSAFGAMSNPDDPEATKCIKELLETMDSYFDLPERDIDKPFLLAIEDVFSISGRGTVATGRIERGIIKVGQEVEIVGIRETRKTTVTGVEMFQKILEQGEAGDNVGLLLRGVDKKDVERGQVIAAIGTITPHKKFKASIYCLTKEEGGRHKPFFSGYRPQFFFRTTDVTGMVSLEGKEMVMPGDNVDIVVELISLIAMDKNVEFAVREGGRTVASGRILEILE.

The tr-type G domain maps to 10–205 (KPHMNVGTIG…TMDSYFDLPE (196 aa)). The segment at 19–26 (GHVDHGKT) is G1. 19–26 (GHVDHGKT) contributes to the GTP binding site. Residue threonine 26 coordinates Mg(2+). The segment at 61–65 (GITIN) is G2. The tract at residues 82–85 (DCPG) is G3. Residues 82-86 (DCPGH) and 137-140 (NKLD) each bind GTP. Residues 137–140 (NKLD) are G4. Residues 173–175 (SAF) are G5.

This sequence belongs to the TRAFAC class translation factor GTPase superfamily. Classic translation factor GTPase family. EF-Tu/EF-1A subfamily. Monomer.

It localises to the cytoplasm. It carries out the reaction GTP + H2O = GDP + phosphate + H(+). In terms of biological role, GTP hydrolase that promotes the GTP-dependent binding of aminoacyl-tRNA to the A-site of ribosomes during protein biosynthesis. The sequence is that of Elongation factor Tu from Borrelia hermsii (strain HS1 / DAH).